The chain runs to 992 residues: Epstein-Barr nuclear antigen 6 (992 aa).

The tract at residues 1–70 (MESFEGQGDS…SRGDENRGWM (70 aa)) is disordered. Over residues 12–31 (QSPDNERGDNVQTTGEHDQD) the composition is skewed to basic and acidic residues. The segment at 130 to 159 (LILDSGLDTQHILCFVMAARQRLQDIRRGP) is interaction with host PIM1. 3 disordered regions span residues 355–905 (ATGG…DSMA), 931–954 (PLDI…PARC), and 967–992 (DNSE…SELD). Positions 381–391 (VELESSDDELP) are enriched in acidic residues. Over residues 445-461 (AQSTPERPGPSEQSSVT) the composition is skewed to polar residues. Pro residues predominate over residues 479–495 (QPPPVPKPVPVKPTPPP). Residues 506–520 (YDDDVIEVIDVETTE) are compositionally biased toward acidic residues. Residues 551–555 (PPTVS) form a 1-1; approximate repeat. The 12 X 5 AA approximate tandem repeats of P-P-A-A-G stretch occupies residues 551-610 (PPTVSPSDTGPPAVGPPAAGPPAAGPPAAGPPAAGPPAAGPPAAGPRILAPLSAGPPAAG). Residues 556–560 (PSDTG) form a 2-1; approximate repeat. The 3-1; approximate repeat unit spans residues 561–565 (PPAVG). The segment covering 563 to 594 (AVGPPAAGPPAAGPPAAGPPAAGPPAAGPPAA) has biased composition (pro residues). 6 tandem repeats follow at residues 566-570 (PPAAG), 571-575 (PPAAG), 576-580 (PPAAG), 581-585 (PPAAG), 586-590 (PPAAG), and 591-595 (PPAAG). The segment covering 595 to 611 (GPRILAPLSAGPPAAGP) has biased composition (low complexity). The stretch at 596–600 (PRILA) is one 10-1; approximate repeat. One copy of the 11-1; approximate repeat lies at 601-605 (PLSAG). Residues 606 to 610 (PPAAG) form a 12-1 repeat. Polar residues-rich tracts occupy residues 659–676 (TQMQ…TQPT) and 700–714 (IESS…TQPI). Basic and acidic residues predominate over residues 715-724 (SHEEQPRYED). Low complexity-rich tracts occupy residues 738-764 (AAQP…QGYQ) and 772-781 (PYQGYQEPPA). 3 repeat units span residues 741-753 (PAPQ…YQEP), 754-766 (PAPQ…YQEP), and 767-779 (PPPQ…YQEP). The segment at 741-779 (PAPQAPYQGYQEPPAPQAPYQGYQEPPPPQAPYQGYQEP) is 3 X 13 AA tandem repeats of P-[AP]-P-Q-A-P-Y-Q-G-Y-Q-E-P. Positions 845 to 857 (DQVSQFPHLQSET) are enriched in polar residues. Low complexity predominate over residues 859–881 (PPRLQLSLVPLVSSSAPSWSSPQ). Pro residues predominate over residues 882 to 899 (PRAPIRPIPTRFPPPPMP).

It belongs to the herpesviridae EBNA-6 family. In terms of assembly, interacts with host CTPB1; this interaction leads to gene repression, but also seems to interfere with the repressive function of CtBP pre-bound to DNA, leading to EBNA6 mediated up-regulation of many host genes. Interacts with host MYC; this interaction enhances MYC stability. Interacts (via N-terminus) with host RBPJ. Interacts (via N-terminus) with host histone H2AX; this interaction facilitates H2AX proteasomal degradation. Interacts with host TP73; this interaction inhibits TP73-mediated apoptotic pathway. Interacts (via N-terminus) with host PIM1; this interaction upregulates and stabilizes PIM1 and induces cell proliferation by inhibiting the growth suppressive properties of p21.

The protein resides in the host nucleus. The protein localises to the host nucleus matrix. Functionally, plays an essential role for the activation and immortalization of human B-cells. Represses transcription of viral promoters TP1 and Cp through interaction with host RBPJ, and inhibits EBNA2-mediated activation of these promoters. Targets host chromatin through interactions with host transcription factors, especially RBPJ and IRF4. Alternatively, EBNA6 also regulates the transcription of the EBV oncogene LMP1 in a cell cycle-dependent manner. Modulates the activity of several host proteins involved in cell cycle regulation including host cyclin A, MYC, RB, p21 and p27 mainly through binding to the host SCF(SKP2) complex. Inhibits the promoter of host H2AX and targets H2AX to proteasomal degradation in order to promote latency and cell proliferation. Upregulates host PIM1 expression and stabilization. Potentiates PIM1 to promote cell proliferation by inhibiting the growth suppressive properties of p21. This chain is Epstein-Barr nuclear antigen 6 (EBNA6), found in Epstein-Barr virus (strain B95-8) (HHV-4).